A 323-amino-acid chain; its full sequence is DNA repair and recombination protein RadA (323 aa).

Residue G114–T121 participates in ATP binding.

It belongs to the eukaryotic RecA-like protein family.

Functionally, involved in DNA repair and in homologous recombination. Binds and assemble on single-stranded DNA to form a nucleoprotein filament. Hydrolyzes ATP in a ssDNA-dependent manner and promotes DNA strand exchange between homologous DNA molecules. This chain is DNA repair and recombination protein RadA, found in Picrophilus torridus (strain ATCC 700027 / DSM 9790 / JCM 10055 / NBRC 100828 / KAW 2/3).